A 364-amino-acid polypeptide reads, in one-letter code: Probable mannose-1-phosphate guanylyltransferase 2 (364 aa).

The GDP-alpha-D-mannose site is built by Leu6 and Val7. Residues Gly9, Gly11, Thr12, Arg13, and Lys23 each contribute to the diphosphate site. The GDP-alpha-D-mannose site is built by Gly88, Asn112, Asp114, Gly149, and Asn176.

Belongs to the transferase hexapeptide repeat family.

The catalysed reaction is alpha-D-mannose 1-phosphate + GTP + H(+) = GDP-alpha-D-mannose + diphosphate. It functions in the pathway nucleotide-sugar biosynthesis; GDP-alpha-D-mannose biosynthesis; GDP-alpha-D-mannose from alpha-D-mannose 1-phosphate (GTP route): step 1/1. Its function is as follows. Catalyzes a reaction of the Smirnoff-Wheeler pathway, the major route to ascorbate biosynthesis in plants. This is Probable mannose-1-phosphate guanylyltransferase 2 from Arabidopsis thaliana (Mouse-ear cress).